We begin with the raw amino-acid sequence, 728 residues long: Catalase-peroxidase (728 aa).

The segment at 1–26 (MDNPTDTAGKCPVAHGNKPRGPSNRD) is disordered. Residues 96–218 (WHSAGTYRIT…LGAVQMGLIY (123 aa)) constitute a cross-link (tryptophyl-tyrosyl-methioninium (Trp-Tyr) (with M-244)). H97 acts as the Proton acceptor in catalysis. A cross-link (tryptophyl-tyrosyl-methioninium (Tyr-Met) (with W-96)) is located at residues 218–244 (YVNPEGPGGNPDPLASARDIRETFARM). Heme b is bound at residue H259.

Belongs to the peroxidase family. Peroxidase/catalase subfamily. In terms of assembly, homodimer or homotetramer. Heme b serves as cofactor. Post-translationally, formation of the three residue Trp-Tyr-Met cross-link is important for the catalase, but not the peroxidase activity of the enzyme.

The enzyme catalyses H2O2 + AH2 = A + 2 H2O. The catalysed reaction is 2 H2O2 = O2 + 2 H2O. In terms of biological role, bifunctional enzyme with both catalase and broad-spectrum peroxidase activity. The polypeptide is Catalase-peroxidase (Rhizobium etli (strain CIAT 652)).